Reading from the N-terminus, the 219-residue chain is Proteasome subunit beta type-9 (219 aa).

The propeptide at 1–20 (MLQAGAPTAGSFRTGEVHTG) is removed in mature form. T21 (nucleophile) is an active-site residue. Residues K53 and K109 each carry the N6-acetyllysine modification.

The protein belongs to the peptidase T1B family. The 26S proteasome consists of a 20S proteasome core and two 19S regulatory subunits. The 20S proteasome core is composed of 28 subunits that are arranged in four stacked rings, resulting in a barrel-shaped structure. The two end rings are each formed by seven alpha subunits, and the two central rings are each formed by seven beta subunits. The catalytic chamber with the active sites is on the inside of the barrel. Component of the immunoproteasome, where it displaces the equivalent housekeeping subunit PSMB6. Component of the spermatoproteasome, a form of the proteasome specifically found in testis. Interacts with NCOA2 and NCOA3. Autocleaved. The resulting N-terminal Thr residue of the mature subunit is responsible for the nucleophile proteolytic activity. Detected in the cytoplasmic lobe of elongated spermatids, in residual bodies, and in the acrosomal cap of round spermatids.

Its subcellular location is the cytoplasm. It localises to the nucleus. The catalysed reaction is Cleavage of peptide bonds with very broad specificity.. Functionally, the proteasome is a multicatalytic proteinase complex which is characterized by its ability to cleave peptides with Arg, Phe, Tyr, Leu, and Glu adjacent to the leaving group at neutral or slightly basic pH. The proteasome has an ATP-dependent proteolytic activity. This subunit is involved in antigen processing to generate class I binding peptides. This Rattus norvegicus (Rat) protein is Proteasome subunit beta type-9 (Psmb9).